The primary structure comprises 361 residues: Collagenase (361 aa).

Belongs to the peptidase U32 family. Homodimer. A metal cation is required as a cofactor.

Activity somewhat enhanced by calcium ions, inhibited by zinc and Fe(3+) ions and by p-chloromercuribenzoic acid and EDTA. Activity is enhanced by salivary peptide cystatin and reduced by salivary peptide histatin. Has collagenase activity. Active on soluble collagen, reconstituted type I collagen, heat denatured type I collagen and azocoll, but not gelatin or the synthetic bacterial collagenase substrate PZ-PLGPA. May play a role in virulence. This Porphyromonas gingivalis (Bacteroides gingivalis) protein is Collagenase.